Reading from the N-terminus, the 37-residue chain is Mau operon transcriptional activator (37 aa).

This sequence belongs to the LysR transcriptional regulatory family.

In terms of biological role, transcriptional activator of the mau genes involved in methylamine metabolism. This chain is Mau operon transcriptional activator (mauR), found in Paracoccus versutus (Thiobacillus versutus).